A 299-amino-acid chain; its full sequence is METKTAKILDGKTLAEKIQKELTAQIIEVQAKIGRPPGLAVLMVGDNPASAAYVRNKEKSCAKVGIASFGKHFPQETSQKELEDVIAALNQDEQVDGILVQLPLPEHLDAVKLLHQIEPDKDADGLHPVNLGRLVRGEKGLRSCTPAGVMRLLAEYEISLRGKQAVVVGRSILVGKPMALMLLEADATVTIAHSRSQDLKSITQNADILVAAAGLPGLITADMVKPGAVVVDVGINRVTDANGKSRLVGDINFASIAGVAEYITPVPGGIGPMTVALLLQNTVTSYLQTAKESGALDVK.

Residues glycine 169 to serine 171, serine 194, and isoleucine 235 each bind NADP(+).

The protein belongs to the tetrahydrofolate dehydrogenase/cyclohydrolase family. In terms of assembly, homodimer.

It catalyses the reaction (6R)-5,10-methylene-5,6,7,8-tetrahydrofolate + NADP(+) = (6R)-5,10-methenyltetrahydrofolate + NADPH. The catalysed reaction is (6R)-5,10-methenyltetrahydrofolate + H2O = (6R)-10-formyltetrahydrofolate + H(+). It participates in one-carbon metabolism; tetrahydrofolate interconversion. In terms of biological role, catalyzes the oxidation of 5,10-methylenetetrahydrofolate to 5,10-methenyltetrahydrofolate and then the hydrolysis of 5,10-methenyltetrahydrofolate to 10-formyltetrahydrofolate. This chain is Bifunctional protein FolD, found in Trichormus variabilis (strain ATCC 29413 / PCC 7937) (Anabaena variabilis).